The sequence spans 574 residues: 5'-nucleotidase (574 aa).

The N-terminal stretch at 1–26 (MCPRAARAPATLLLALGAVLWPAAGA) is a signal peptide. The Zn(2+) site is built by D36 and H38. A disulfide bridge links C51 with C57. N-linked (GlcNAc...) asparagine glycosylation is present at N53. D85, N117, H220, and H243 together coordinate Zn(2+). N311 and N333 each carry an N-linked (GlcNAc...) asparagine glycan. 2 disulfide bridges follow: C353/C358 and C365/C387. AMP is bound at residue R354. R354 contacts IMP. AMP is bound by residues N390 and R395. Positions 390 and 395 each coordinate IMP. N403 carries N-linked (GlcNAc...) asparagine glycosylation. F417 serves as a coordination point for AMP. F417 serves as a coordination point for IMP. Cysteines 476 and 479 form a disulfide. The AMP site is built by F500 and D506. The IMP site is built by F500 and D506. Residue S549 is the site of GPI-anchor amidated serine attachment. Positions 550–574 (TGSHCHGSFSLIFLSLWAVIFVLYQ) are cleaved as a propeptide — removed in mature form.

It belongs to the 5'-nucleotidase family. Homodimer. The cofactor is Zn(2+).

It localises to the cell membrane. The enzyme catalyses a ribonucleoside 5'-phosphate + H2O = a ribonucleoside + phosphate. It carries out the reaction a 2'-deoxyribonucleoside 5'-phosphate + H2O = a 2'-deoxyribonucleoside + phosphate. The catalysed reaction is dTMP + H2O = thymidine + phosphate. It catalyses the reaction CMP + H2O = cytidine + phosphate. The enzyme catalyses IMP + H2O = inosine + phosphate. It carries out the reaction AMP + H2O = adenosine + phosphate. The catalysed reaction is GMP + H2O = guanosine + phosphate. It catalyses the reaction UMP + H2O = uridine + phosphate. The enzyme catalyses dAMP + H2O = 2'-deoxyadenosine + phosphate. It carries out the reaction dCMP + H2O = 2'-deoxycytidine + phosphate. With respect to regulation, inhibited by adenosine 5'-(alpha,beta-methylene)-diphosphate (AMPCP). In terms of biological role, catalyzes the hydrolysis of nucleotide monophosphates, releasing inorganic phosphate and the corresponding nucleoside, with AMP being the preferred substrate. Shows a preference for ribonucleotide monophosphates over their equivalent deoxyribose forms. Other substrates include IMP, UMP, GMP, CMP, dAMP, dCMP, dTMP, NAD and NMN. This Homo sapiens (Human) protein is 5'-nucleotidase (NT5E).